Here is a 142-residue protein sequence, read N- to C-terminus: Large ribosomal subunit protein uL11 (142 aa).

Belongs to the universal ribosomal protein uL11 family. As to quaternary structure, part of the ribosomal stalk of the 50S ribosomal subunit. Interacts with L10 and the large rRNA to form the base of the stalk. L10 forms an elongated spine to which L12 dimers bind in a sequential fashion forming a multimeric L10(L12)X complex. Post-translationally, one or more lysine residues are methylated.

Forms part of the ribosomal stalk which helps the ribosome interact with GTP-bound translation factors. This is Large ribosomal subunit protein uL11 from Vibrio campbellii (strain ATCC BAA-1116).